The following is a 484-amino-acid chain: Sodium/pantothenate symporter (484 aa).

A run of 13 helical transmembrane segments spans residues 3–23, 45–65, 74–94, 124–144, 162–182, 190–210, 238–258, 273–293, 307–327, 366–386, 397–417, 424–444, and 446–466; these read LGII…AIFA, GFVL…FVGG, LGWV…LGAL, VWLS…VQFI, LLLF…RAVV, TVMI…LGGV, FMAS…HTAV, MLIG…AGAL, VIPT…FLAA, VSYF…FAAL, LFAF…GIYW, GALS…QLGI, and LFNF…FLVG.

Belongs to the sodium:solute symporter (SSF) (TC 2.A.21) family.

It is found in the cell inner membrane. The enzyme catalyses (R)-pantothenate(in) + Na(+)(in) = (R)-pantothenate(out) + Na(+)(out). Its function is as follows. Catalyzes the sodium-dependent uptake of extracellular pantothenate. This chain is Sodium/pantothenate symporter (panF), found in Haemophilus influenzae (strain ATCC 51907 / DSM 11121 / KW20 / Rd).